We begin with the raw amino-acid sequence, 251 residues long: Gamma-glutamyl peptidase 4 (251 aa).

Residues 16 to 213 (SEFAKKTYGG…IDRVLAGGHI (198 aa)) form the Glutamine amidotransferase type-1 domain. C100 (nucleophile) is an active-site residue. Residues H192 and E194 contribute to the active site.

The protein belongs to the peptidase C26 family.

It is found in the cytoplasm. The protein localises to the cytosol. It functions in the pathway secondary metabolite biosynthesis. In terms of biological role, involved in glucosinolate biosynthesis. Hydrolyzes the gamma-glutamyl peptide bond of several glutathione (GSH) conjugates to produce Cys-Gly conjugates related to glucosinolates. The gamma-Glu-Cys-Gly-GSH conjugates are the sulfur-donating molecule in glucosinolate biosynthesis. This is Gamma-glutamyl peptidase 4 from Arabidopsis thaliana (Mouse-ear cress).